The chain runs to 243 residues: Pyridoxine 5'-phosphate synthase (243 aa).

Asparagine 6 serves as a coordination point for 3-amino-2-oxopropyl phosphate. 8 to 9 is a binding site for 1-deoxy-D-xylulose 5-phosphate; that stretch reads DH. Position 17 (arginine 17) interacts with 3-amino-2-oxopropyl phosphate. Catalysis depends on histidine 42, which acts as the Proton acceptor. 2 residues coordinate 1-deoxy-D-xylulose 5-phosphate: arginine 44 and histidine 49. The Proton acceptor role is filled by glutamate 72. Threonine 102 provides a ligand contact to 1-deoxy-D-xylulose 5-phosphate. Histidine 192 (proton donor) is an active-site residue. Residues glycine 193 and 214–215 each bind 3-amino-2-oxopropyl phosphate; that span reads GH.

Belongs to the PNP synthase family. Homooctamer; tetramer of dimers.

The protein localises to the cytoplasm. It carries out the reaction 3-amino-2-oxopropyl phosphate + 1-deoxy-D-xylulose 5-phosphate = pyridoxine 5'-phosphate + phosphate + 2 H2O + H(+). Its pathway is cofactor biosynthesis; pyridoxine 5'-phosphate biosynthesis; pyridoxine 5'-phosphate from D-erythrose 4-phosphate: step 5/5. Catalyzes the complicated ring closure reaction between the two acyclic compounds 1-deoxy-D-xylulose-5-phosphate (DXP) and 3-amino-2-oxopropyl phosphate (1-amino-acetone-3-phosphate or AAP) to form pyridoxine 5'-phosphate (PNP) and inorganic phosphate. The polypeptide is Pyridoxine 5'-phosphate synthase (Sulfurihydrogenibium sp. (strain YO3AOP1)).